The primary structure comprises 187 residues: Keratin-associated protein 5-8 (187 aa).

Repeat copies occupy residues 28 to 31 (CCVP), 34 to 37 (CCKP), 40 to 43 (CCVP), 109 to 112 (CCKP), 119 to 122 (CCKP), 138 to 141 (CCKP), 148 to 151 (CCKP), 167 to 170 (CCKP), and 177 to 180 (CCVP). Residues 28-180 (CCVPICCCKP…CCSQSSCCVP (153 aa)) form a 9 X 4 AA repeats of C-C-X-P region.

It belongs to the KRTAP type 5 family. Restricted to hair root, not detected in any other tissues. Expressed in cuticle layers of differentiating hair follicles.

In the hair cortex, hair keratin intermediate filaments are embedded in an interfilamentous matrix, consisting of hair keratin-associated protein (KRTAP), which are essential for the formation of a rigid and resistant hair shaft through their extensive disulfide bond cross-linking with abundant cysteine residues of hair keratins. The matrix proteins include the high-sulfur and high-glycine-tyrosine keratins. The chain is Keratin-associated protein 5-8 (KRTAP5-8) from Homo sapiens (Human).